The following is a 193-amino-acid chain: MLLIAGLGNPGSHYQNNRHNIGFMAVDAIHEAFSFSPWSKKFQAEVSNGLINGEKILLIKPQTFMNLSGQAIGEALRFYKLDLDHLIVFYDELDLPPGTVRVKIGGRSNGHNGIKSIDSHCGNNYHHVRLGIGRPISKELVDQYVLGNFTQSDQKWLSTLLGVIANNVAMLIKGDSNCFMNKISLTMKSQGLQ.

Tyr14 is a binding site for tRNA. The active-site Proton acceptor is His19. The tRNA site is built by Phe64, Asn66, and Asn112.

This sequence belongs to the PTH family. In terms of assembly, monomer.

Its subcellular location is the cytoplasm. The enzyme catalyses an N-acyl-L-alpha-aminoacyl-tRNA + H2O = an N-acyl-L-amino acid + a tRNA + H(+). Hydrolyzes ribosome-free peptidyl-tRNAs (with 1 or more amino acids incorporated), which drop off the ribosome during protein synthesis, or as a result of ribosome stalling. In terms of biological role, catalyzes the release of premature peptidyl moieties from peptidyl-tRNA molecules trapped in stalled 50S ribosomal subunits, and thus maintains levels of free tRNAs and 50S ribosomes. The chain is Peptidyl-tRNA hydrolase from Bartonella bacilliformis (strain ATCC 35685 / KC583 / Herrer 020/F12,63).